The chain runs to 205 residues: MRGKLITLEGIDGSGKSTVAEKLQKNPEIKAFKPVFTREPTRGTLTGDAVEKAIQSDTDQFAELFLFTADHAEHLAKLIKPALENGKIVISDRYSDSRYAYQGITLKTRLENPLEWVKDLHRSWTIVPDLTFLFDIRPEISIERCGKRGEQSKFEKLEFLQGVRAIFLKLAADDPERFVVIDASRSPEYIEKEVVKKILEFLSRN.

Position 10 to 17 (10 to 17) interacts with ATP; that stretch reads GIDGSGKS.

This sequence belongs to the thymidylate kinase family.

It catalyses the reaction dTMP + ATP = dTDP + ADP. This chain is Probable thymidylate kinase, found in Methanosarcina barkeri (strain Fusaro / DSM 804).